Here is a 506-residue protein sequence, read N- to C-terminus: Lysine--tRNA ligase (506 aa).

Residues glutamate 416 and glutamate 423 each coordinate Mg(2+).

This sequence belongs to the class-II aminoacyl-tRNA synthetase family. Homodimer. Mg(2+) is required as a cofactor.

It is found in the cytoplasm. The catalysed reaction is tRNA(Lys) + L-lysine + ATP = L-lysyl-tRNA(Lys) + AMP + diphosphate. This Bordetella bronchiseptica (strain ATCC BAA-588 / NCTC 13252 / RB50) (Alcaligenes bronchisepticus) protein is Lysine--tRNA ligase.